The primary structure comprises 1108 residues: Probable E3 ubiquitin ligase SUD1 (1108 aa).

The interval 1–60 is disordered; it reads MEISPADSLSISGAAASEVVSEPSVSSSSSSSSPNQASPNPFSNMDPAVSTATGSRYVDD. The span at 10–44 shows a compositional bias: low complexity; the sequence is SISGAAASEVVSEPSVSSSSSSSSPNQASPNPFSN. The segment at 60–121 adopts an RING-CH-type zinc-finger fold; the sequence is DDEDEEDVCR…EVCKHPFSFS (62 aa). 8 residues coordinate Zn(2+): C68, C71, C85, C87, H95, C98, C111, and C114. 2 consecutive transmembrane segments (helical) span residues 157 to 177 and 197 to 217; these read FVLSVWLLTIPFITFWIWRLA and VILTDCLHGFLLSASIVFIFL. Positions 237-246 are enriched in basic and acidic residues; it reads ERDDDVDRNG. The segment at 237–273 is disordered; that stretch reads ERDDDVDRNGARAARRPAGQANRNLAGEGNGEDAGDQ. The stretch at 286–308 forms a coiled coil; sequence ENVLARLDIQAARLEAQVEQMFD. 8 consecutive transmembrane segments (helical) span residues 339-359, 362-382, 462-482, 489-509, 525-545, 572-592, 630-650, and 669-689; these read FTVLASNMIFLGVVIFVPFTL, IILYHVSWLFAAARGPAVAAS, AVGYMFIVFLVFLYLGIIALI, PLTVGRFYGIASIVEAVPSLL, VAFLLVIELGVFPLMCGWWLD, LVHWVVGIMYMLQISIFVSLL, VLLSVAVYGSLIVMLVFLPVK, and PFTEIPADMLLFQICIPFIIE. Residues 762–784 are disordered; that stretch reads PNRSRLRAGNVNTGEEYEDDDEQ. Transmembrane regions (helical) follow at residues 796 to 816, 844 to 864, 894 to 914, 923 to 943, 982 to 1002, and 1017 to 1036; these read IILLLLVAWVTLLLFNSALIV, YAFVIGTYAFWTTISGARYAI, AIWVFIIPVLIGLLFELLVIV, SPVFLLYQDWALGLIFLKIWT, EIVFPIVMKLLTALCVPYVLA, and SAVYRFAWIGCLSVSLFCFC.

In terms of tissue distribution, expressed in cotyledons, leaves, roots, stems, inflorescences and siliques. Expression higher at the top than at the base of the stem.

Its subcellular location is the membrane. It carries out the reaction S-ubiquitinyl-[E2 ubiquitin-conjugating enzyme]-L-cysteine + [acceptor protein]-L-lysine = [E2 ubiquitin-conjugating enzyme]-L-cysteine + N(6)-ubiquitinyl-[acceptor protein]-L-lysine.. It functions in the pathway protein modification; protein ubiquitination. In terms of biological role, probable E3 ubiquitin ligase acting as a positive post-transcriptional regulator of 3-hydroxy-3-methylglutaryl-coenzyme A reductase activity. Might be involved in the quality control that degrades misfolded proteins. The protein is Probable E3 ubiquitin ligase SUD1 (SUD1) of Arabidopsis thaliana (Mouse-ear cress).